We begin with the raw amino-acid sequence, 184 residues long: Probable S-adenosyl-L-methionine-binding protein PYRAB06630 (184 aa).

The TsaA-like domain occupies 9–140 (YRPIGIIHSP…YVPEFDVREN (132 aa)). Residues 26-28 (PIQ), 65-66 (HR), Arg89, and 120-123 (LDGT) contribute to the S-adenosyl-L-methionine site.

The protein belongs to the tRNA methyltransferase O family.

In Pyrococcus abyssi (strain GE5 / Orsay), this protein is Probable S-adenosyl-L-methionine-binding protein PYRAB06630.